The chain runs to 1199 residues: Metabotropic glutamate receptor 1 (1199 aa).

The first 20 residues, 1–20 (MVRLLLIFFPMIFLEMSILP), serve as a signal peptide directing secretion. Topologically, residues 21–592 (RMPDRKVLLA…IRYLEWSDIE (572 aa)) are extracellular. A disulfide bond links cysteine 67 and cysteine 109. Tyrosine 74 lines the L-glutamate pocket. Residue asparagine 98 is glycosylated (N-linked (GlcNAc...) asparagine). Residues serine 165 and 186 to 188 (SAT) contribute to the L-glutamate site. An N-linked (GlcNAc...) asparagine glycan is attached at asparagine 223. L-glutamate is bound at residue tyrosine 236. A disulfide bond links cysteine 289 and cysteine 291. Aspartate 318 is a binding site for L-glutamate. An intrachain disulfide couples cysteine 378 to cysteine 394. Asparagine 397 carries N-linked (GlcNAc...) asparagine glycosylation. Lysine 409 is a binding site for L-glutamate. An intrachain disulfide couples cysteine 432 to cysteine 439. An N-linked (GlcNAc...) asparagine glycan is attached at asparagine 515. Residues 593-615 (SIIAIAFSCLGILVTLFVTLIFV) form a helical membrane-spanning segment. Residues 616–629 (LYRDTPVVKSSSRE) are Cytoplasmic-facing. The helical transmembrane segment at 630–650 (LCYIILAGIFLGYVCPFTLIA) threads the bilayer. Over 651-658 (KPTTTSCY) the chain is Extracellular. A disulfide bridge connects residues cysteine 657 and cysteine 746. Residues 659–680 (LQRLLVGLSSAMCYSALVTKTN) traverse the membrane as a helical segment. Topologically, residues 681-703 (RIARILAGSKKKICTRKPRFMSA) are cytoplasmic. Residues 704-727 (WAQVIIASILISVQLTLVVTLIIM) traverse the membrane as a helical segment. The Extracellular segment spans residues 728-750 (EPPMPILSYPSIKEVYLICNTSN). An N-linked (GlcNAc...) asparagine glycan is attached at asparagine 747. A helical membrane pass occupies residues 751–772 (LGVVAPVGYNGLLIMSCTYYAF). The Cytoplasmic segment spans residues 773 to 785 (KTRNVPANFNEAK). Residues 786-807 (YIAFTMYTTCIIWLAFVPIYFG) form a helical membrane-spanning segment. The Extracellular portion of the chain corresponds to 808–815 (SNYKIITT). The helical transmembrane segment at 816-840 (CFAVSLSVTVALGCMFTPKMYIIIA) threads the bilayer. At 841-1199 (KPERNVRSAF…RDYKQSSSTL (359 aa)) the chain is on the cytoplasmic side. Residue serine 853 is modified to Phosphoserine. Threonine 871 is modified (phosphothreonine). 3 disordered regions span residues 882–906 (GAGN…APKG), 959–1035 (EEDN…QPKS), and 1055–1082 (HAVL…QHLQ). Residues 885–895 (NANSNGKSVSW) show a composition bias toward polar residues. Residues serine 894 and serine 969 each carry the phosphoserine modification. Positions 1012–1032 (GLPPPLPQQQQQPPPQPPPQQ) are enriched in pro residues. At serine 1097 the chain carries Phosphoserine. The disordered stretch occupies residues 1118–1177 (VYEREGNTEEDDLEEEEDLPAASKLTPEDSPALTPPSPFRDSVASGSSVPSSPVSESVLC). A compositionally biased stretch (acidic residues) spans 1125–1136 (TEEDDLEEEEDL). At serine 1147 the chain carries Phosphoserine. At threonine 1151 the chain carries Phosphothreonine. Serine 1154 is modified (phosphoserine). Residues 1159 to 1175 (SVASGSSVPSSPVSESV) are compositionally biased toward low complexity.

This sequence belongs to the G-protein coupled receptor 3 family. As to quaternary structure, homodimer; disulfide-linked. The PPXXF motif binds HOMER1, HOMER2 and HOMER3. Interacts with TAMALIN. Interacts with RYR1, RYR2, ITPR1, SHANK1 and SHANK3. Interacts with SHIA1. Expressed in the striatum (at protein level). Expressed in type II unipolar brush cells of the cerebellum (at protein level).

Its subcellular location is the cell membrane. The protein resides in the postsynaptic cell membrane. The protein localises to the cell projection. It localises to the dendrite. Its function is as follows. G-protein coupled receptor for glutamate. Ligand binding causes a conformation change that triggers signaling via guanine nucleotide-binding proteins (G proteins) and modulates the activity of down-stream effectors. Signaling activates a phosphatidylinositol-calcium second messenger system. May participate in the central action of glutamate in the CNS, such as long-term potentiation in the hippocampus and long-term depression in the cerebellum (By. similarity). May function in the light response in the retina. Induces GRID1 and GRID2 cation-channel activation via GNAQ-PLC-PKC pathway in dopaminergic neurons and cerebellar Purkinje cell, respectively. This is Metabotropic glutamate receptor 1 (Grm1) from Mus musculus (Mouse).